The following is a 101-amino-acid chain: Small ribosomal subunit protein uS14 (101 aa).

This sequence belongs to the universal ribosomal protein uS14 family. As to quaternary structure, part of the 30S ribosomal subunit. Contacts proteins S3 and S10.

In terms of biological role, binds 16S rRNA, required for the assembly of 30S particles and may also be responsible for determining the conformation of the 16S rRNA at the A site. This is Small ribosomal subunit protein uS14 from Burkholderia ambifaria (strain MC40-6).